A 161-amino-acid polypeptide reads, in one-letter code: SsrA-binding protein (161 aa).

Basic and acidic residues predominate over residues 139–153; the sequence is RESIKRKEENRELDR. A disordered region spans residues 139 to 161; it reads RESIKRKEENRELDRLRKRRRQE.

The protein belongs to the SmpB family.

The protein resides in the cytoplasm. Functionally, required for rescue of stalled ribosomes mediated by trans-translation. Binds to transfer-messenger RNA (tmRNA), required for stable association of tmRNA with ribosomes. tmRNA and SmpB together mimic tRNA shape, replacing the anticodon stem-loop with SmpB. tmRNA is encoded by the ssrA gene; the 2 termini fold to resemble tRNA(Ala) and it encodes a 'tag peptide', a short internal open reading frame. During trans-translation Ala-aminoacylated tmRNA acts like a tRNA, entering the A-site of stalled ribosomes, displacing the stalled mRNA. The ribosome then switches to translate the ORF on the tmRNA; the nascent peptide is terminated with the 'tag peptide' encoded by the tmRNA and targeted for degradation. The ribosome is freed to recommence translation, which seems to be the essential function of trans-translation. The protein is SsrA-binding protein of Syntrophobacter fumaroxidans (strain DSM 10017 / MPOB).